The primary structure comprises 388 residues: Dual-specificity RNA methyltransferase RlmN (388 aa).

Glutamate 109 (proton acceptor) is an active-site residue. Positions 115–354 (EEDRATLCVS…TIVRKTRGDD (240 aa)) constitute a Radical SAM core domain. Cysteine 122 and cysteine 359 are disulfide-bonded. The [4Fe-4S] cluster site is built by cysteine 129, cysteine 133, and cysteine 136. S-adenosyl-L-methionine contacts are provided by residues 183-184 (GE), serine 215, 237-239 (SLH), and asparagine 316. The active-site S-methylcysteine intermediate is cysteine 359.

This sequence belongs to the radical SAM superfamily. RlmN family. [4Fe-4S] cluster serves as cofactor.

Its subcellular location is the cytoplasm. The enzyme catalyses adenosine(2503) in 23S rRNA + 2 reduced [2Fe-2S]-[ferredoxin] + 2 S-adenosyl-L-methionine = 2-methyladenosine(2503) in 23S rRNA + 5'-deoxyadenosine + L-methionine + 2 oxidized [2Fe-2S]-[ferredoxin] + S-adenosyl-L-homocysteine. The catalysed reaction is adenosine(37) in tRNA + 2 reduced [2Fe-2S]-[ferredoxin] + 2 S-adenosyl-L-methionine = 2-methyladenosine(37) in tRNA + 5'-deoxyadenosine + L-methionine + 2 oxidized [2Fe-2S]-[ferredoxin] + S-adenosyl-L-homocysteine. In terms of biological role, specifically methylates position 2 of adenine 2503 in 23S rRNA and position 2 of adenine 37 in tRNAs. m2A2503 modification seems to play a crucial role in the proofreading step occurring at the peptidyl transferase center and thus would serve to optimize ribosomal fidelity. The protein is Dual-specificity RNA methyltransferase RlmN of Enterobacter sp. (strain 638).